We begin with the raw amino-acid sequence, 198 residues long: Heat shock 70 kDa protein (198 aa).

The span at 170 to 191 shows a compositional bias: gly residues; that stretch reads GGGVPSGMPGGMPGAGGGGGKG. Residues 170–198 form a disordered region; that stretch reads GGGVPSGMPGGMPGAGGGGGKGPTIEEVD.

Belongs to the heat shock protein 70 family.

The sequence is that of Heat shock 70 kDa protein from Schistosoma japonicum (Blood fluke).